An 87-amino-acid polypeptide reads, in one-letter code: Small ribosomal subunit protein uS15 (87 aa).

Belongs to the universal ribosomal protein uS15 family. Part of the 30S ribosomal subunit. Forms a bridge to the 50S subunit in the 70S ribosome, contacting the 23S rRNA.

Its function is as follows. One of the primary rRNA binding proteins, it binds directly to 16S rRNA where it helps nucleate assembly of the platform of the 30S subunit by binding and bridging several RNA helices of the 16S rRNA. In terms of biological role, forms an intersubunit bridge (bridge B4) with the 23S rRNA of the 50S subunit in the ribosome. The polypeptide is Small ribosomal subunit protein uS15 (Dehalococcoides mccartyi (strain ATCC BAA-2100 / JCM 16839 / KCTC 5957 / BAV1)).